Consider the following 85-residue polypeptide: Large ribosomal subunit protein bL27 (85 aa).

The disordered stretch occupies residues 1–21 (MAHKKAGGSTRNGRDSESKRL).

It belongs to the bacterial ribosomal protein bL27 family.

The chain is Large ribosomal subunit protein bL27 from Photorhabdus laumondii subsp. laumondii (strain DSM 15139 / CIP 105565 / TT01) (Photorhabdus luminescens subsp. laumondii).